We begin with the raw amino-acid sequence, 129 residues long: Large ribosomal subunit protein bL12 (129 aa).

Belongs to the bacterial ribosomal protein bL12 family. Homodimer. Part of the ribosomal stalk of the 50S ribosomal subunit. Forms a multimeric L10(L12)X complex, where L10 forms an elongated spine to which 2 to 4 L12 dimers bind in a sequential fashion. Binds GTP-bound translation factors.

Its function is as follows. Forms part of the ribosomal stalk which helps the ribosome interact with GTP-bound translation factors. Is thus essential for accurate translation. The chain is Large ribosomal subunit protein bL12 from Pseudothermotoga lettingae (strain ATCC BAA-301 / DSM 14385 / NBRC 107922 / TMO) (Thermotoga lettingae).